A 108-amino-acid polypeptide reads, in one-letter code: uncharacterized protein (108 aa).

Positions 1 to 12 are enriched in polar residues; it reads MSNQQKQLQLPS. The disordered stretch occupies residues 1–22; it reads MSNQQKQLQLPSASIKKPKEKQ.

This is an uncharacterized protein from Dictyostelium discoideum (Social amoeba).